Here is a 1075-residue protein sequence, read N- to C-terminus: DNA-directed RNA polymerase subunit beta (1075 aa).

This sequence belongs to the RNA polymerase beta chain family. In terms of assembly, in plastids the minimal PEP RNA polymerase catalytic core is composed of four subunits: alpha, beta, beta', and beta''. When a (nuclear-encoded) sigma factor is associated with the core the holoenzyme is formed, which can initiate transcription.

It is found in the plastid. Its subcellular location is the chloroplast. It catalyses the reaction RNA(n) + a ribonucleoside 5'-triphosphate = RNA(n+1) + diphosphate. Its function is as follows. DNA-dependent RNA polymerase catalyzes the transcription of DNA into RNA using the four ribonucleoside triphosphates as substrates. This Zea mays (Maize) protein is DNA-directed RNA polymerase subunit beta.